A 600-amino-acid chain; its full sequence is Sulfite reductase [NADPH] flavoprotein alpha-component (600 aa).

One can recognise a Flavodoxin-like domain in the interval 63–201; it reads ITLISASQTG…AAQAWRQRVV (139 aa). FMN contacts are provided by residues 69–74, 116–119, and 152–161; these read SQTGNA, STQG, and LGDTSYEHFC. The 215-residue stretch at 235–449 folds into the FAD-binding FR-type domain; sequence ESPLTATLSV…IEHNDNFRLP (215 aa). Residues threonine 323, alanine 357, 387–390, 405–407, and 420–423 each bind FAD; these read RLYS, TVG, and GGAS. Residues 520-521, 526-530, and aspartate 562 each bind NADP(+); these read SR and KIYVQ. Tyrosine 600 is an FAD binding site.

It belongs to the NADPH-dependent sulphite reductase flavoprotein subunit CysJ family. The protein in the N-terminal section; belongs to the flavodoxin family. This sequence in the C-terminal section; belongs to the flavoprotein pyridine nucleotide cytochrome reductase family. As to quaternary structure, alpha(8)-beta(8). The alpha component is a flavoprotein, the beta component is a hemoprotein. The cofactor is FAD. Requires FMN as cofactor.

The enzyme catalyses hydrogen sulfide + 3 NADP(+) + 3 H2O = sulfite + 3 NADPH + 4 H(+). Its pathway is sulfur metabolism; hydrogen sulfide biosynthesis; hydrogen sulfide from sulfite (NADPH route): step 1/1. In terms of biological role, component of the sulfite reductase complex that catalyzes the 6-electron reduction of sulfite to sulfide. This is one of several activities required for the biosynthesis of L-cysteine from sulfate. The flavoprotein component catalyzes the electron flow from NADPH -&gt; FAD -&gt; FMN to the hemoprotein component. The protein is Sulfite reductase [NADPH] flavoprotein alpha-component of Cronobacter sakazakii (strain ATCC BAA-894) (Enterobacter sakazakii).